A 445-amino-acid polypeptide reads, in one-letter code: Asparagine--tRNA ligase (445 aa).

It belongs to the class-II aminoacyl-tRNA synthetase family. Homodimer.

It localises to the cytoplasm. The enzyme catalyses tRNA(Asn) + L-asparagine + ATP = L-asparaginyl-tRNA(Asn) + AMP + diphosphate + H(+). The polypeptide is Asparagine--tRNA ligase (Deinococcus deserti (strain DSM 17065 / CIP 109153 / LMG 22923 / VCD115)).